We begin with the raw amino-acid sequence, 478 residues long: Methionine aminopeptidase 2-1 (478 aa).

The tract at residues 1–124 (MGSKSPEGHN…PRVPLSTLFP (124 aa)) is disordered. The segment covering 46–56 (NDDDDADDDEK) has biased composition (acidic residues). A compositionally biased stretch (basic residues) spans 92–104 (KKKKKRKRSKKKA). Residue H230 coordinates substrate. Residues D251, D262, and H331 each coordinate a divalent metal cation. H339 provides a ligand contact to substrate. E364 and E459 together coordinate a divalent metal cation.

This sequence belongs to the peptidase M24A family. Methionine aminopeptidase eukaryotic type 2 subfamily. Co(2+) serves as cofactor. It depends on Zn(2+) as a cofactor. The cofactor is Mn(2+). Fe(2+) is required as a cofactor.

Its subcellular location is the cytoplasm. It carries out the reaction Release of N-terminal amino acids, preferentially methionine, from peptides and arylamides.. Cotranslationally removes the N-terminal methionine from nascent proteins. The N-terminal methionine is often cleaved when the second residue in the primary sequence is small and uncharged (Met-Ala-, Cys, Gly, Pro, Ser, Thr, or Val). This is Methionine aminopeptidase 2-1 from Aspergillus clavatus (strain ATCC 1007 / CBS 513.65 / DSM 816 / NCTC 3887 / NRRL 1 / QM 1276 / 107).